The sequence spans 458 residues: Preferentially expressed antigen in melanoma-like protein 1 (458 aa).

The stretch at 99-126 (RCKLQVLDLRVMPLKLWNRLPVFGTAGC) is one LRR 1; degenerate repeat. Residues 176 to 200 (SLCCCKLQIWAMSMYYHRKLLEILD) form an LRR 2; degenerate repeat. The stretch at 201 to 227 (LDSVQELRMYCISNPVCLLNFAPYLGR) is one LRR 3; degenerate repeat. The LRR 4; degenerate repeat unit spans residues 228-263 (MRNLRCLILSHLWQTFSMTPVEKQQVITQFTSQFLK). LRR repeat units lie at residues 264–289 (LKCL…FWWL), 290–321 (KTPL…SQLK), 322–340 (HLNL…PLRV), 346–373 (ASTL…ALRC), and 374–398 (CTQL…LAYN).

This sequence belongs to the PRAME family. In terms of tissue distribution, specifically expressed in testis (at protein level).

Its subcellular location is the cytoplasm. The protein localises to the cytoplasmic vesicle. It is found in the secretory vesicle. The protein resides in the acrosome. It localises to the cell projection. Its subcellular location is the cilium. The protein localises to the flagellum. Its function is as follows. May play a role in acrosome development and also in sperm maturation and motility. This chain is Preferentially expressed antigen in melanoma-like protein 1, found in Mus musculus (Mouse).